We begin with the raw amino-acid sequence, 97 residues long: Apolipoprotein C-II (97 aa).

Residues 1–22 (MGSRFFLALFLVILMLGNEVQG) form the signal peptide. The tract at residues 63–71 (SMDEKLRDM) is lipid binding. The segment at 75-97 (SSAAMSTYAGIFTDQLLTLLRGE) is lipoprotein lipase cofactor.

The protein belongs to the apolipoprotein C2 family. In terms of tissue distribution, adult and fetal liver, intestine and peritoneal macrophages.

The protein resides in the secreted. Its function is as follows. Component of chylomicrons, very low-density lipoproteins (VLDL), low-density lipoproteins (LDL), and high-density lipoproteins (HDL) in plasma. Plays an important role in lipoprotein metabolism as an activator of lipoprotein lipase. In Mus musculus (Mouse), this protein is Apolipoprotein C-II (Apoc2).